The chain runs to 1641 residues: Alpha-2-macroglobulin (1641 aa).

The first 31 residues, 1-31 (MRDRVAMMLRPLVRGWIPRAVLLLTVAFSFG), serve as a signal peptide directing secretion. A lipid anchor (N-palmitoyl cysteine) is attached at Cys32. The S-diacylglycerol cysteine moiety is linked to residue Cys32. Residues 1166–1169 (CAEQ) constitute a cross-link (isoglutamyl cysteine thioester (Cys-Gln)).

It belongs to the protease inhibitor I39 (alpha-2-macroglobulin) family. Bacterial alpha-2-macroglobulin subfamily.

Its subcellular location is the cell membrane. Functionally, protects the bacterial cell from host peptidases. The chain is Alpha-2-macroglobulin from Xylella fastidiosa (strain Temecula1 / ATCC 700964).